Here is a 341-residue protein sequence, read N- to C-terminus: S-adenosylmethionine:tRNA ribosyltransferase-isomerase (341 aa).

It belongs to the QueA family. Monomer.

It is found in the cytoplasm. The enzyme catalyses 7-aminomethyl-7-carbaguanosine(34) in tRNA + S-adenosyl-L-methionine = epoxyqueuosine(34) in tRNA + adenine + L-methionine + 2 H(+). It participates in tRNA modification; tRNA-queuosine biosynthesis. Functionally, transfers and isomerizes the ribose moiety from AdoMet to the 7-aminomethyl group of 7-deazaguanine (preQ1-tRNA) to give epoxyqueuosine (oQ-tRNA). This is S-adenosylmethionine:tRNA ribosyltransferase-isomerase from Pelodictyon phaeoclathratiforme (strain DSM 5477 / BU-1).